Reading from the N-terminus, the 525-residue chain is NAD(P)H-quinone oxidoreductase chain 4 1 (525 aa).

14 consecutive transmembrane segments (helical) span residues 6–26 (FPWLTTIILLPIAASLLIPII), 36–56 (WYALIVGLIDFALIVYAFYTS), 91–111 (LIILTGFITTLATLAAWPVTL), 115–135 (LFYFLLLAMYGGQIAVFAVQD), 136–156 (LLLFFLVWELELIPVYLLLAI), 169–189 (FILYTAGGSLFILLAALTMAF), 212–232 (LLLYAGFLIAYAIKLPIIPLH), 243–263 (TAPAHMLLAGILLKMGGYALI), 277–297 (FAPVLVVLGVVNIIYAALTSF), 314–334 (MGFVIIGFASFTDLGLSGAVL), 335–355 (QMVSHGLIGASLFFLVGATYD), 375–397 (IFAMFTACSMASLALPGMSGFVA), 417–437 (VIVVFLMAVGVILTPIYLLSM), and 464–484 (VFVIACLLVPIIGIGFYPKLL).

The protein belongs to the complex I subunit 4 family.

The protein localises to the cellular thylakoid membrane. It carries out the reaction a plastoquinone + NADH + (n+1) H(+)(in) = a plastoquinol + NAD(+) + n H(+)(out). It catalyses the reaction a plastoquinone + NADPH + (n+1) H(+)(in) = a plastoquinol + NADP(+) + n H(+)(out). In terms of biological role, NDH-1 shuttles electrons from NAD(P)H, via FMN and iron-sulfur (Fe-S) centers, to quinones in the respiratory chain. The immediate electron acceptor for the enzyme in this species is believed to be plastoquinone. Couples the redox reaction to proton translocation (for every two electrons transferred, four hydrogen ions are translocated across the cytoplasmic membrane), and thus conserves the redox energy in a proton gradient. This is NAD(P)H-quinone oxidoreductase chain 4 1 from Trichormus variabilis (strain ATCC 29413 / PCC 7937) (Anabaena variabilis).